We begin with the raw amino-acid sequence, 289 residues long: tRNA acetyltransferase TAN1 (289 aa).

Residues 1 to 10 show a composition bias toward basic and acidic residues; the sequence is MGEKRNRNGK. 2 disordered regions span residues 1–31 and 64–83; these read MGEKRNRNGKDANSQNRKKFKVSSGFLDPGT and DIKEGEDESENDEKKDLSIE. Residue Ser-72 is modified to Phosphoserine. The 114-residue stretch at 146–259 folds into the THUMP domain; the sequence is ADPKNMVKRT…KSNIGMCVVD (114 aa).

It is found in the cytoplasm. The protein localises to the nucleus. In terms of biological role, probable tRNA acetyltransferase required for the formation of the modified nucleoside N(4)-acetylcytidine in serine and leucine tRNAs. Binds RNA. This chain is tRNA acetyltransferase TAN1 (TAN1), found in Saccharomyces cerevisiae (strain ATCC 204508 / S288c) (Baker's yeast).